The sequence spans 341 residues: Phosphoribosylformylglycinamidine cyclo-ligase (341 aa).

It belongs to the AIR synthase family.

The protein resides in the cytoplasm. It carries out the reaction 2-formamido-N(1)-(5-O-phospho-beta-D-ribosyl)acetamidine + ATP = 5-amino-1-(5-phospho-beta-D-ribosyl)imidazole + ADP + phosphate + H(+). It participates in purine metabolism; IMP biosynthesis via de novo pathway; 5-amino-1-(5-phospho-D-ribosyl)imidazole from N(2)-formyl-N(1)-(5-phospho-D-ribosyl)glycinamide: step 2/2. The protein is Phosphoribosylformylglycinamidine cyclo-ligase of Finegoldia magna (strain ATCC 29328 / DSM 20472 / WAL 2508) (Peptostreptococcus magnus).